A 79-amino-acid chain; its full sequence is Dolichol phosphate-mannose biosynthesis regulatory protein (79 aa).

Helical transmembrane passes span 8–28 and 50–70; these read IGFV…TWVI and IIIP…FLGL.

Belongs to the DPM2 family. Component of the dolichol-phosphate mannose (DPM) synthase complex composed of dpm1, dpm2 and dpm3.

The protein localises to the endoplasmic reticulum membrane. It participates in protein modification; protein glycosylation. Functionally, regulates the biosynthesis of dolichol phosphate-mannose. Regulatory subunit of the dolichol-phosphate mannose (DPM) synthase complex; essential for the ER localization and stable expression of dpm1. The sequence is that of Dolichol phosphate-mannose biosynthesis regulatory protein (dpm2-1) from Dictyostelium discoideum (Social amoeba).